The sequence spans 724 residues: 1,4-alpha-glucan branching enzyme GlgB 1 (724 aa).

The active-site Nucleophile is the D403. E456 acts as the Proton donor in catalysis.

This sequence belongs to the glycosyl hydrolase 13 family. GlgB subfamily. As to quaternary structure, monomer.

The enzyme catalyses Transfers a segment of a (1-&gt;4)-alpha-D-glucan chain to a primary hydroxy group in a similar glucan chain.. The protein operates within glycan biosynthesis; glycogen biosynthesis. Functionally, catalyzes the formation of the alpha-1,6-glucosidic linkages in glycogen by scission of a 1,4-alpha-linked oligosaccharide from growing alpha-1,4-glucan chains and the subsequent attachment of the oligosaccharide to the alpha-1,6 position. This chain is 1,4-alpha-glucan branching enzyme GlgB 1, found in Xanthomonas campestris pv. campestris (strain 8004).